Consider the following 872-residue polypeptide: MKQLSSAQVRQMWLDFWATKGHSVEPSVSLVPVNDPTLLWINSGVATLKKYFDGTIIPENPRITNAQKAIRTNDIENVGKTARHHTMFEMLGNFSIGDYFRDEAITWAYELLTSPEWFDFPAEKLYMTYYPDDKDSYNRWIEVGVDPSHLIPIEDNFWEIGAGPSGPDTEIFFDRGEAFDPENIGLRLLAEDIENDRYIEIWNIVLSQFNADPAVPRSEYKELPHKNIDTGAGLERLVAVIQGAKTNFETDLFMPIIREVEKLSGKVYDQDGDNMSFKVIADHIRSLSFAIGDGALPGNEGRGYVLRRLLRRASMHGQKLGINEPFLYKLVPTVGKIMESYYPEVLEKRDFIEKIVKSEEESFARTLHSGQHFAQGIVADLKEKGQSVIAGQDVFKLYDTYGFPVELTEEIAEEAGMTVDREGFEAAMKEQQERARASAVKGGSMGMQNETLQNITVESVFNYNTSQLSSKLVAIVADNAEVGAVSEGTASLIFAETSFYAEMGGQVADYGQILDESGKIVATVTNVQKAPNGQALHTVEVLAPLALNQEYTLAIDSNRRHRVMKNHTATHLLHAALHNILGNHATQAGSLNEVEFLRFDFTHFQAVTAEELRAIEQQVNEKIWEALEVKTVETDIDTAKEMGAMALFGEKYGKEVRVVTIGDYSIELCGGTHVGNTSEIGLFKIVKEEGIGSGTRRILAVTGKEAFEAYREQEDALKAIAATLKAPQVKEVPHKVEGLQEQLRQLQKENAELKEKAAAAAAGDIFKDVKEVNGHRYIASQVSVSDAGALRTFADNWKQKDYSDLLVLVAAIGDKVNVLVASKTKDLHAGNLVKELAPIIDGRGGGKPDMAMAGGSNQAKIQELLDAVAGKL.

The Zn(2+) site is built by His-567, His-571, Cys-669, and His-673.

It belongs to the class-II aminoacyl-tRNA synthetase family. The cofactor is Zn(2+).

Its subcellular location is the cytoplasm. The enzyme catalyses tRNA(Ala) + L-alanine + ATP = L-alanyl-tRNA(Ala) + AMP + diphosphate. Functionally, catalyzes the attachment of alanine to tRNA(Ala) in a two-step reaction: alanine is first activated by ATP to form Ala-AMP and then transferred to the acceptor end of tRNA(Ala). Also edits incorrectly charged Ser-tRNA(Ala) and Gly-tRNA(Ala) via its editing domain. The protein is Alanine--tRNA ligase of Streptococcus pneumoniae (strain CGSP14).